A 1782-amino-acid polypeptide reads, in one-letter code: Vitellogenin (1782 aa).

A signal peptide spans 1-15 (MKLFVLAAIIAAVSS). In terms of domain architecture, Vitellogenin spans 34–812 (WQVGKQYRYE…SEDSLLPKDF (779 aa)). Disordered stretches follow at residues 333–367 (HYESSSSSSSSESHEFNFPEQHEHPHQSNQRSRRS) and 379–406 (VLKKRNSESSSGSSSSSADSSSTYINDD). The segment covering 344–358 (ESHEFNFPEQHEHPH) has biased composition (basic and acidic residues). Over residues 386 to 400 (ESSSGSSSSSADSSS) the composition is skewed to low complexity. N569, N587, N1357, N1463, and N1596 each carry an N-linked (GlcNAc...) asparagine glycan. Residues 1449–1638 (PYCSIDGTRI…AYSLNEENSD (190 aa)) form the VWFD domain. C1451 and C1602 form a disulfide bridge.

As to quaternary structure, heterotetramer of two heavy and two light chains. Post-translationally, glycosylated and phosphorylated. In terms of tissue distribution, detected in oocytes (at protein level). Produced by the fat body, where it is cleaved before being secreted into hemolymph. Sequestered then by a single class of receptor mediated endocytosis in the ovary.

Its subcellular location is the secreted. It localises to the cytoplasm. It is found in the cytoplasmic granule. In terms of biological role, precursor of the egg-yolk proteins that are sources of nutrients during embryonic development. The protein is Vitellogenin (VG) of Bombyx mori (Silk moth).